Reading from the N-terminus, the 154-residue chain is 6,7-dimethyl-8-ribityllumazine synthase (154 aa).

Residues Phe-26, 60–62 (ALE), and 84–86 (CII) contribute to the 5-amino-6-(D-ribitylamino)uracil site. 89-90 (ET) is a (2S)-2-hydroxy-3-oxobutyl phosphate binding site. His-92 acts as the Proton donor in catalysis. Residue Asn-117 participates in 5-amino-6-(D-ribitylamino)uracil binding. Residue Arg-131 coordinates (2S)-2-hydroxy-3-oxobutyl phosphate.

It belongs to the DMRL synthase family.

The enzyme catalyses (2S)-2-hydroxy-3-oxobutyl phosphate + 5-amino-6-(D-ribitylamino)uracil = 6,7-dimethyl-8-(1-D-ribityl)lumazine + phosphate + 2 H2O + H(+). It functions in the pathway cofactor biosynthesis; riboflavin biosynthesis; riboflavin from 2-hydroxy-3-oxobutyl phosphate and 5-amino-6-(D-ribitylamino)uracil: step 1/2. Its function is as follows. Catalyzes the formation of 6,7-dimethyl-8-ribityllumazine by condensation of 5-amino-6-(D-ribitylamino)uracil with 3,4-dihydroxy-2-butanone 4-phosphate. This is the penultimate step in the biosynthesis of riboflavin. The polypeptide is 6,7-dimethyl-8-ribityllumazine synthase (Leptothrix cholodnii (strain ATCC 51168 / LMG 8142 / SP-6) (Leptothrix discophora (strain SP-6))).